The following is a 319-amino-acid chain: Lipopolysaccharide heptosyltransferase 1 (319 aa).

ADP-L-glycero-beta-D-manno-heptose-binding residues include Thr-187, Thr-188, Lys-192, Glu-222, Met-242, Asp-261, Thr-262, Gly-263, and His-266.

Belongs to the glycosyltransferase 9 family.

Its subcellular location is the cell inner membrane. It catalyses the reaction an alpha-Kdo-(2-&gt;4)-alpha-Kdo-(2-&gt;6)-lipid A + ADP-L-glycero-beta-D-manno-heptose = an L-alpha-D-Hep-(1-&gt;5)-[alpha-Kdo-(2-&gt;4)]-alpha-Kdo-(2-&gt;6)-lipid A + ADP + H(+). The enzyme catalyses alpha-Kdo-(2-&gt;4)-alpha-Kdo-(2-&gt;6)-lipid A (E. coli) + ADP-L-glycero-beta-D-manno-heptose = L-alpha-D-Hep-(1-&gt;5)-[alpha-Kdo-(2-&gt;4)]-alpha-Kdo-(2-&gt;6)-lipid A (E. coli) + ADP + H(+). It functions in the pathway bacterial outer membrane biogenesis; LPS core biosynthesis. Functionally, glycosyltransferase involved in the biosynthesis of the core oligosaccharide region of lipopolysaccharide (LPS). Catalyzes the addition of the first heptose unit to one 3-deoxy-D-manno-octulosonic acid (Kdo) residue of the Kdo2-lipid A module. The analog ADP-mannose can serve as an alternative donor in place of ADP-L-glycero-D-manno-heptose for the glycosylation of Kdo2-lipid A. Displays no activity with ADP-glucose, GDP-mannose, UDP-glucose or UDP-galactose. The chain is Lipopolysaccharide heptosyltransferase 1 from Escherichia coli (strain K12).